A 227-amino-acid chain; its full sequence is Endolytic peptidoglycan transglycosylase RlpA (227 aa).

An N-terminal signal peptide occupies residues 1 to 21; sequence MMNHKFVLLILLIFYCFFLSG. Cys22 carries N-palmitoyl cysteine lipidation. The S-diacylglycerol cysteine moiety is linked to residue Cys22.

Belongs to the RlpA family.

The protein localises to the cell membrane. Its function is as follows. Lytic transglycosylase with a strong preference for naked glycan strands that lack stem peptides. This chain is Endolytic peptidoglycan transglycosylase RlpA, found in Rickettsia bellii (strain RML369-C).